The chain runs to 550 residues: Calcyphosin-2 (550 aa).

Disordered regions lie at residues 1–20 and 175–198; these read MVPP…DNFS and ISDP…DSER. Over residues 181-190 the composition is skewed to polar residues; that stretch reads DLNTKNQESS. EF-hand domains are found at residues 379–414, 415–452, and 453–488; these read RILT…FHLE, VSEQ…EMNE, and YRKS…KKHP. The Ca(2+) site is built by Asp466, Asn468, Thr470, and Asp477.

The polypeptide is Calcyphosin-2 (Caps2) (Mus musculus (Mouse)).